The chain runs to 459 residues: Cysteine--tRNA ligase (459 aa).

Cysteine 28 is a binding site for Zn(2+). A 'HIGH' region motif is present at residues 30–40 (VTIYDLCHIGH). The Zn(2+) site is built by cysteine 209, histidine 234, and glutamate 238. The 'KMSKS' region motif lies at 266–270 (KMSKS). Lysine 269 lines the ATP pocket.

The protein belongs to the class-I aminoacyl-tRNA synthetase family. As to quaternary structure, monomer. It depends on Zn(2+) as a cofactor.

The protein resides in the cytoplasm. The enzyme catalyses tRNA(Cys) + L-cysteine + ATP = L-cysteinyl-tRNA(Cys) + AMP + diphosphate. This Shewanella baltica (strain OS185) protein is Cysteine--tRNA ligase.